Reading from the N-terminus, the 2381-residue chain is Highly reducing polyketide synthase virA (2381 aa).

The region spanning 1 to 420 (MDALHLACHL…GANGHVILES (420 aa)) is the Ketosynthase family 3 (KS3) domain. Active-site for beta-ketoacyl synthase activity residues include Cys171, His306, and His344. The tract at residues 535–851 (VFTGQGAQYA…PYSPTLVRKE (317 aa)) is malonyl-CoA:ACP transacylase (MAT) domain. Ser629 functions as the For malonyltransferase activity in the catalytic mechanism. Residues 920 to 1064 (HELLGTRATA…GSIRVMESTL (145 aa)) are N-terminal hotdog fold. Positions 920–1232 (HELLGTRATA…HLRMNEYTGK (313 aa)) are dehydratase (DH) domain. A PKS/mFAS DH domain is found at 920 to 1235 (HELLGTRATA…MNEYTGKAPV (316 aa)). His952 (proton acceptor; for dehydratase activity) is an active-site residue. A C-terminal hotdog fold region spans residues 1078–1235 (HEVWGMSRWY…MNEYTGKAPV (158 aa)). Catalysis depends on Asp1144, which acts as the Proton donor; for dehydratase activity. Positions 1639–1956 (GMTDTIHFQQ…NKDRVGKVVV (318 aa)) are enoyl reductase (ER) domain. The ketoreductase (KR) domain stretch occupies residues 1981–2159 (TYLLVGCLGG…AVSVGLGMIS (179 aa)). Positions 2297 to 2375 (TMLDAILRLT…TLAEFIEEKL (79 aa)) constitute a Carrier domain. An O-(pantetheine 4'-phosphoryl)serine modification is found at Ser2334.

It functions in the pathway secondary metabolite biosynthesis. Functionally, highly reducing polyketide synthase; part of the gene cluster that mediates the biosynthesis of virensols and trichoxide, fungal natural products that contain or are derived from a salicylaldehyde core. The pathway begins with the synthesis of the reduced chain in virensol C by the highly reducing polyketide synthase virA via condensation of one acetate and 8 malonate units. VirA has interesting programming rules since the first 2 ketides are fully reduced, the 3 following ketides undergo beta-dehydration, and the last 3 ketides are only reduced to beta-hydroxys to yield the trihydroxy portion. The production of aldehyde virensol C by virA alone is surprising, since virA does not contain a reductase (R) domain that is typically associated with reductive product release in HRPKS. The cupin-domain enzyme virC is involved in enhancing virA product turnover. The short-chain dehydrogenase virB then oxidizes the C-7 alcohol of virensol C to a ketone, yielding virensol D. Virensol D is further transformed to salicylaldehyde 5-deoxyaurocitrin by the short-chain dehydrogenase virD. VirD catalyzes the dehydrogenation of C-3 to form the beta-ketone aldehyde, which is followed by the generation of the nucleophilic C-2 that is required for the intramolecular aldol condensation between C-2 and C-7, itself followed by dehydration and aromatization which leads to salicylaldehyde 5-deoxyaurocitrin. While the dehydrogenation of virensol D is definitely catalyzed by virD, the aldol condensation and dehydration may be uncatalyzed or assisted by virD. The short chain dehydrogenase virG then converts salicylaldehyde 5-deoxyaurocitrin into virensol B which is further hydroxylated by the cytochrome P450 monooxygenase virE to yield the hydroquinone virensol A. VirI then may oxidize virensol A to form the quinone, while virH performs the epoxidation. Finally, the two remaining short-chain dehydrogenases, virK and virL, are probably responsible for reducing the ketones to the corresponding alcohols to furnish the epoxycyclohexanol structure in trichoxide. This chain is Highly reducing polyketide synthase virA, found in Hypocrea virens (strain Gv29-8 / FGSC 10586) (Gliocladium virens).